Reading from the N-terminus, the 152-residue chain is Snaclec lebecin subunit alpha (152 aa).

An N-terminal signal peptide occupies residues 1–23 (MGRSISVSFGLLVVFLSLSGTGA). Cystine bridges form between C27–C38, C54–C147, and C122–C139. In terms of domain architecture, C-type lectin spans 34–148 (YEGGCYYVFD…CELAYHFICS (115 aa)).

As to quaternary structure, heterodimer with the beta subunit (AC W5XCJ6); disulfide-linked. Expressed by the venom gland.

The protein localises to the secreted. Inhibits human breast cancer cells (MDA-MB231) migration and proliferation, as well as their adhesion to fibrinogen and fibronectin. This inhibition may be due to the binding to receptors of the integrin family, probably alpha-v/beta-3 (ITGAV/ITGB3) (40% inhibition of cell adhesion) and alpha-5/beta-1 (ITGA5/ITGB1) (by comparison with lebectin). The polypeptide is Snaclec lebecin subunit alpha (Macrovipera lebetinus (Levantine viper)).